A 130-amino-acid polypeptide reads, in one-letter code: Large ribosomal subunit protein bL12 (130 aa).

The protein belongs to the bacterial ribosomal protein bL12 family. In terms of assembly, homodimer. Part of the ribosomal stalk of the 50S ribosomal subunit. Forms a multimeric L10(L12)X complex, where L10 forms an elongated spine to which 2 to 4 L12 dimers bind in a sequential fashion. Binds GTP-bound translation factors.

Forms part of the ribosomal stalk which helps the ribosome interact with GTP-bound translation factors. Is thus essential for accurate translation. This Herpetosiphon aurantiacus (strain ATCC 23779 / DSM 785 / 114-95) protein is Large ribosomal subunit protein bL12.